The chain runs to 149 residues: Arginine repressor (149 aa).

It belongs to the ArgR family.

The protein resides in the cytoplasm. It participates in amino-acid biosynthesis; L-arginine biosynthesis [regulation]. Its function is as follows. Regulates arginine biosynthesis genes. The protein is Arginine repressor of Listeria monocytogenes serotype 4b (strain F2365).